The chain runs to 549 residues: Hydroxylamine reductase (549 aa).

[4Fe-4S] cluster-binding residues include C5, C8, C17, and C23. Hybrid [4Fe-2O-2S] cluster-binding residues include H243, E267, C311, C403, C431, C456, E491, and K493. A Cysteine persulfide modification is found at C403.

The protein belongs to the HCP family. [4Fe-4S] cluster is required as a cofactor. The cofactor is hybrid [4Fe-2O-2S] cluster.

The protein localises to the cytoplasm. It carries out the reaction A + NH4(+) + H2O = hydroxylamine + AH2 + H(+). Functionally, catalyzes the reduction of hydroxylamine to form NH(3) and H(2)O. The chain is Hydroxylamine reductase from Desulfitobacterium hafniense (strain Y51).